Consider the following 146-residue polypeptide: UPF0306 protein HD_1359 (146 aa).

The protein belongs to the UPF0306 family.

The chain is UPF0306 protein HD_1359 from Haemophilus ducreyi (strain 35000HP / ATCC 700724).